A 488-amino-acid chain; its full sequence is MAAAATATAGTKGVVRQVIGPVLDVEFPAGKLPKILNALRIDGKNPSGQHIAITAEVQQLLGDHRVRAVAMSSTDGLVRGMEALDTGSAISVPVGEATLGRIFNVLGEPVDEQGPVTTDATAPIHRPAPKLTELETKPTVFETGIKVIDLLAPYRQGGKVGLFGGAGVGKTVLIQELINNIAKEHGGVSVFGGVGERTREGNDLYEEFKESGVINSDDLSKSKVALCFGQMNEPPGARMRVGLSALTMAEHFRDVNKQDVLLFIDNIFRFVQAGSEVSALLGRMPSAVGYQPTLGTDVGALQERITSTLEGSITSIQAVYVPADDLTDPAPATTFAHLDATTVLARALAAKGIYPAVDPLDSTSTMLQPSVVGDEHYRTARSVQATLQRYKELQDIIAILGLDELSEDDRRTVDRARKIEKFLSQPFFVAEIFTGMSGKYVKLEETIAGFNMILAGELDHLPEQAFYLVGNIDEVKAKAEKIASEAKG.

164-171 is a binding site for ATP; that stretch reads GGAGVGKT.

This sequence belongs to the ATPase alpha/beta chains family. In terms of assembly, F-type ATPases have 2 components, CF(1) - the catalytic core - and CF(0) - the membrane proton channel. CF(1) has five subunits: alpha(3), beta(3), gamma(1), delta(1), epsilon(1). CF(0) has four main subunits: a(1), b(1), b'(1) and c(9-12).

The protein localises to the cellular thylakoid membrane. It carries out the reaction ATP + H2O + 4 H(+)(in) = ADP + phosphate + 5 H(+)(out). Produces ATP from ADP in the presence of a proton gradient across the membrane. The catalytic sites are hosted primarily by the beta subunits. This chain is ATP synthase subunit beta, found in Prochlorococcus marinus (strain MIT 9303).